We begin with the raw amino-acid sequence, 708 residues long: Protein SUPPRESSOR OF MAX2 1A (708 aa).

The interval 248–283 (QMASKPQEKAASPPGSPVRTDLVLGPKQTETTPEKT) is disordered. Positions 537–541 (FDLNE) match the EAR motif.

The protein belongs to the ClpA/ClpB family.

Probable component of a transcriptional corepressor complex that acts downstream of MAX2 to negatively regulate karrikins/strigolactone responses. Involved in the (-)-germacrene D signaling pathway influencing plant fitness and occurring in the stigma in a KAI2IA-dependent manner. The chain is Protein SUPPRESSOR OF MAX2 1A from Petunia hybrida (Petunia).